The primary structure comprises 332 residues: Cell growth regulator with RING finger domain protein 1 (332 aa).

The segment at 274-309 (CVVCQNGGVNWVLLPCRHACLCDSCVRYFKQCPMCR) adopts an RING-type zinc-finger fold.

It is found in the nucleus. Its subcellular location is the endoplasmic reticulum. Its function is as follows. Able to inhibit growth in several cell lines. This is Cell growth regulator with RING finger domain protein 1 (Cgrrf1) from Mus musculus (Mouse).